A 311-amino-acid polypeptide reads, in one-letter code: Putative F-box protein At1g31090 (311 aa).

The F-box domain maps to 4-53; the sequence is GANSDSIPTDLIYEILSRLSVKPITRFRCVSKLWESIICRQDFTELFHNR. The tract at residues 287 to 311 is disordered; sequence RPAEQNTSTSSREDHLVRTVKRKRA.

This chain is Putative F-box protein At1g31090, found in Arabidopsis thaliana (Mouse-ear cress).